The sequence spans 609 residues: Pentatricopeptide repeat-containing protein At1g03540 (609 aa).

14 PPR repeats span residues 25 to 59 (SAPT…EIPA), 60 to 94 (TPKL…GLET), 95 to 126 (DRNV…RFVK), 127 to 161 (DAIS…GLDA), 162 to 196 (NEFT…GFEW), 197 to 227 (NHFI…MPEP), 228 to 263 (DVIC…GLVP), 264 to 298 (DGST…GIGS), 299 to 329 (NVVV…MSKK), 330 to 364 (NSVS…DLYC), 396 to 426 (NVIV…MSIR), 427 to 461 (NMIT…GIKP), 462 to 497 (DYIS…GIKP), and 498 to 532 (GTEH…NDAS). A type E motif region spans residues 533–609 (LWGVLLGPCA…TVGQSWIDAH (77 aa)).

The protein belongs to the PPR family. PCMP-E subfamily.

The protein is Pentatricopeptide repeat-containing protein At1g03540 (PCMP-E4) of Arabidopsis thaliana (Mouse-ear cress).